The primary structure comprises 220 residues: Aspartic protease inhibitor 4 (220 aa).

An N-terminal signal peptide occupies residues 1–23 (MMKCLFLLCLCLLPILVFSSTFT). A propeptide spanning residues 24 to 32 (SQNPINLPS) is cleaved from the precursor. Residues 26–31 (NPINLP) carry the Vacuolar targeting signal motif. Asn-51 carries an N-linked (GlcNAc...) asparagine glycan. 2 disulfides stabilise this stretch: Cys-80-Cys-125 and Cys-174-Cys-185.

The protein belongs to the protease inhibitor I3 (leguminous Kunitz-type inhibitor) family. Tubers.

It localises to the vacuole. In terms of biological role, inhibits tightly cathepsin D (aspartic protease) and weakly trypsin (serine protease). May protect the plant by inhibiting proteases of invading organisms. The polypeptide is Aspartic protease inhibitor 4 (Solanum tuberosum (Potato)).